We begin with the raw amino-acid sequence, 95 residues long: UPF0358 protein GTNG_0942 (95 aa).

This sequence belongs to the UPF0358 family.

This is UPF0358 protein GTNG_0942 from Geobacillus thermodenitrificans (strain NG80-2).